We begin with the raw amino-acid sequence, 268 residues long: Glutamate racemase (268 aa).

Substrate contacts are provided by residues 14–15 (DS) and 46–47 (YG). The Proton donor/acceptor role is filled by cysteine 78. Residue 79 to 80 (NS) coordinates substrate. The active-site Proton donor/acceptor is the cysteine 190. 191 to 192 (TH) is a binding site for substrate.

It belongs to the aspartate/glutamate racemases family.

The enzyme catalyses L-glutamate = D-glutamate. Its pathway is cell wall biogenesis; peptidoglycan biosynthesis. Provides the (R)-glutamate required for cell wall biosynthesis. This chain is Glutamate racemase, found in Treponema pallidum (strain Nichols).